Consider the following 537-residue polypeptide: Cytochrome c oxidase subunit 1 (537 aa).

The chain crosses the membrane as a helical span at residues 22-42 (ILYLLFGLVSGIIGSVFSFII). The Ca(2+) site is built by E45, A48, and G50. H68 is a Fe(II)-heme a binding site. Helical transmembrane passes span 70–90 (ILMIFFFIIPALFGAFGNYLV), 104–124 (VNNFTFWLLPPALMLLLISAL), 152–172 (LAILSLQLTGISSTLGSVNLI), 190–210 (LFAWAIMITSILLLLTLPVLA), 241–261 (LFWFFGHPEVYILIMPAFGVV), 279–299 (MLWAMLSIALLGLMVWSHHLF), 318–338 (IAIPTGIKIFSWLATLTGGAI), and 345–365 (MLYAIGFLILFTIGGLTGVIL). Position 247 (H247) interacts with Cu cation. Residues 247–251 (HPEVY) constitute a cross-link (1'-histidyl-3'-tyrosine (His-Tyr)). Y251 is an O2 binding site. Cu cation contacts are provided by H296 and H297. Residues H375 and D376 each contribute to the Mg(2+) site. A run of 2 helical transmembrane segments spans residues 379-399 (FVVAHFHYVLSMGALFGLCGA) and 418-438 (IQFWILFIGVNIVFGPQHFLG). Residue H383 coordinates heme a3. H385 contacts Fe(II)-heme a. P447 serves as a coordination point for Ca(2+). The helical transmembrane segment at 458–478 (FVSSIGSVISILSLFLFMYVM) threads the bilayer.

The protein belongs to the heme-copper respiratory oxidase family. In terms of assembly, component of the cytochrome c oxidase (complex IV, CIV), a multisubunit enzyme composed of a catalytic core of 3 subunits and several supernumerary subunits. The complex exists as a monomer or a dimer and forms supercomplexes (SCs) in the inner mitochondrial membrane with ubiquinol-cytochrome c oxidoreductase (cytochrome b-c1 complex, complex III, CIII). The cofactor is heme. Cu cation serves as cofactor.

It localises to the mitochondrion inner membrane. It carries out the reaction 4 Fe(II)-[cytochrome c] + O2 + 8 H(+)(in) = 4 Fe(III)-[cytochrome c] + 2 H2O + 4 H(+)(out). The protein operates within energy metabolism; oxidative phosphorylation. Its function is as follows. Component of the cytochrome c oxidase, the last enzyme in the mitochondrial electron transport chain which drives oxidative phosphorylation. The respiratory chain contains 3 multisubunit complexes succinate dehydrogenase (complex II, CII), ubiquinol-cytochrome c oxidoreductase (cytochrome b-c1 complex, complex III, CIII) and cytochrome c oxidase (complex IV, CIV), that cooperate to transfer electrons derived from NADH and succinate to molecular oxygen, creating an electrochemical gradient over the inner membrane that drives transmembrane transport and the ATP synthase. Cytochrome c oxidase is the component of the respiratory chain that catalyzes the reduction of oxygen to water. Electrons originating from reduced cytochrome c in the intermembrane space (IMS) are transferred via the dinuclear copper A center (CU(A)) of subunit 2 and heme A of subunit 1 to the active site in subunit 1, a binuclear center (BNC) formed by heme A3 and copper B (CU(B)). The BNC reduces molecular oxygen to 2 water molecules using 4 electrons from cytochrome c in the IMS and 4 protons from the mitochondrial matrix. The protein is Cytochrome c oxidase subunit 1 (cox1) of Schizosaccharomyces pombe (strain 972 / ATCC 24843) (Fission yeast).